A 208-amino-acid chain; its full sequence is Uracil phosphoribosyltransferase (208 aa).

Residues arginine 78, arginine 103, and 130-138 (DPMLATGVS) each bind 5-phospho-alpha-D-ribose 1-diphosphate. Residues isoleucine 193 and 198-200 (GDA) contribute to the uracil site. Residue aspartate 199 coordinates 5-phospho-alpha-D-ribose 1-diphosphate.

It belongs to the UPRTase family. Requires Mg(2+) as cofactor.

The catalysed reaction is UMP + diphosphate = 5-phospho-alpha-D-ribose 1-diphosphate + uracil. The protein operates within pyrimidine metabolism; UMP biosynthesis via salvage pathway; UMP from uracil: step 1/1. Its activity is regulated as follows. Allosterically activated by GTP. Functionally, catalyzes the conversion of uracil and 5-phospho-alpha-D-ribose 1-diphosphate (PRPP) to UMP and diphosphate. The sequence is that of Uracil phosphoribosyltransferase from Thermosipho melanesiensis (strain DSM 12029 / CIP 104789 / BI429).